The following is a 159-amino-acid chain: Cyclic pyranopterin monophosphate synthase (159 aa).

Substrate-binding positions include 75-77 (LCH) and 113-114 (ME). Aspartate 128 is an active-site residue.

This sequence belongs to the MoaC family. In terms of assembly, homohexamer; trimer of dimers.

The catalysed reaction is (8S)-3',8-cyclo-7,8-dihydroguanosine 5'-triphosphate = cyclic pyranopterin phosphate + diphosphate. The protein operates within cofactor biosynthesis; molybdopterin biosynthesis. In terms of biological role, catalyzes the conversion of (8S)-3',8-cyclo-7,8-dihydroguanosine 5'-triphosphate to cyclic pyranopterin monophosphate (cPMP). This is Cyclic pyranopterin monophosphate synthase from Cereibacter sphaeroides (strain ATCC 17029 / ATH 2.4.9) (Rhodobacter sphaeroides).